The following is a 99-amino-acid chain: Malonate decarboxylase acyl carrier protein (99 aa).

Serine 25 is modified (O-(phosphoribosyl dephospho-coenzyme A)serine).

Belongs to the MdcC family. Post-translationally, covalently binds the prosthetic group of malonate decarboxylase.

It localises to the cytoplasm. Functionally, subunit of malonate decarboxylase, it is an acyl carrier protein to which acetyl and malonyl thioester residues are bound via a 2'-(5''-phosphoribosyl)-3'-dephospho-CoA prosthetic group and turn over during the catalytic mechanism. This is Malonate decarboxylase acyl carrier protein from Azotobacter vinelandii (strain DJ / ATCC BAA-1303).